We begin with the raw amino-acid sequence, 187 residues long: Calcium and integrin-binding family member 2 (187 aa).

3 consecutive EF-hand domains span residues 66-101 (RENP…LCES), 103-138 (PREL…LTKS), and 144-179 (EVVL…APDF). Ca(2+)-binding residues include Asp-116, Asn-118, Asp-120, Asp-127, Asp-157, Asp-159, Asp-161, Lys-163, and Asp-168.

As to quaternary structure, monomer. Homodimer. Interacts with WHRN and MYO7A. Interacts with ITGA2B (via C-terminus cytoplasmic tail region); the interactions are stabilized/increased in a calcium and magnesium-dependent manner. Interacts with ITGA7 (via C-terminus cytoplasmic tail region); the interactions are stabilized/increased in a calcium and magnesium-dependent manner. Interacts with TMC1. Interacts with TMC2.

It is found in the cytoplasm. The protein localises to the cell projection. The protein resides in the stereocilium. It localises to the photoreceptor inner segment. Its subcellular location is the cilium. It is found in the photoreceptor outer segment. The protein localises to the cell membrane. The protein resides in the sarcolemma. In terms of biological role, calcium- and integrin-binding protein that plays a role in intracellular calcium homeostasis. Acts as an auxiliary subunit of the sensory mechanoelectrical transduction (MET) channel in hair cells. Essential for mechanoelectrical transduction (MET) currents in auditory hair cells and thereby required for hearing. Regulates the function of hair cell mechanotransduction by controlling the distribution of transmembrane channel-like proteins TMC1 and TMC2, and by regulating the function of the MET channels in hair cells. Required for the maintenance of auditory hair cell stereocilia bundle morphology and function and for hair-cell survival in the cochlea. Critical for proper photoreceptor cell maintenance and function. Plays a role in intracellular calcium homeostasis by decreasing ATP-induced calcium release. This chain is Calcium and integrin-binding family member 2 (Cib2), found in Rattus norvegicus (Rat).